A 237-amino-acid chain; its full sequence is Bax inhibitor 1 (237 aa).

Topologically, residues 1 to 29 are cytoplasmic; that stretch reads MNIFDRKINFDALLKFSHITPSTQQHLKK. A Glycyl lysine isopeptide (Lys-Gly) (interchain with G-Cter in ubiquitin) cross-link involves residue Lys7. Residues 30-50 traverse the membrane as a helical segment; it reads VYASFALCMFVAAAGAYVHVV. At 51–52 the chain is on the lumenal side; the sequence is TR. The helical transmembrane segment at 53–73 threads the bilayer; the sequence is FIQAGLLSALGSLGLMIWLMA. Residues 74–86 are Cytoplasmic-facing; sequence TPHSHETEQKRLG. Residues 87–107 traverse the membrane as a helical segment; that stretch reads LLAGFAFLTGVGLGPALDLCI. Residues 108–112 lie on the Lumenal side of the membrane; it reads AINPS. The chain crosses the membrane as a helical span at residues 113-133; sequence ILPTAFMGTAMIFTCFTLSAL. Residues 134–139 are Cytoplasmic-facing; that stretch reads YARRRS. A helical transmembrane segment spans residues 140–160; it reads YLFLGGILMSAMSLMVLSSLG. Residues 161–166 lie on the Lumenal side of the membrane; sequence NLFFGS. The chain crosses the membrane as a helical span at residues 167-187; it reads IWLFQANLYVGLVVMCGFVLF. Residues 188–206 lie on the Cytoplasmic side of the membrane; that stretch reads DTQLIIEKAENGDKDYIWH. Residues 207–227 constitute an intramembrane region (helical); it reads CVDLFSDFVTLFRKLMMILAM. Residues 228 to 237 are Cytoplasmic-facing; it reads NEKDKKKEKK.

Belongs to the BI1 family. As to quaternary structure, interacts with BCL2 and BCL2L1. Interacts with ERN1. Ubiquitinated by BFAR, leading to proteasomal degradation.

It localises to the endoplasmic reticulum membrane. In terms of biological role, endoplasmic reticulum (ER)-resident protein that confers cellular protection as an anti-apoptotic protein by limiting multiple stress-inducing pathways surrounding the endoplasmic reticulum and mitochondria. Inhibits the activities of the key sensor for the endoplasmic reticulum unfolded protein response IRE1alpha/ERN1 both directly and by blocking BAX/BAK binding. Modulates ER calcium homeostasis by acting as a calcium-leak channel. Negatively regulates autophagy and autophagosome formation, especially during periods of nutrient deprivation, and reduces cell survival during starvation. The polypeptide is Bax inhibitor 1 (TMBIM6) (Sus scrofa (Pig)).